Reading from the N-terminus, the 266-residue chain is Undecaprenyl-diphosphatase (266 aa).

The next 8 helical transmembrane spans lie at 1-21, 39-59, 87-107, 111-131, 144-164, 183-203, 218-238, and 246-266; these read MDTFQVIILALIQGLTEFLPI, QGLSFDVAVNTGSLLAVVMYF, WWIILATIPAVIIGFSAKDFI, FRSIEVIAATTIIFGLLLWWA, VGWKKALVIGIAQAMALIPGT, AAARFSFLMSVPVSLGAAILV, ALGLGILVSFIAAYICIHYFL, and MTPFVIYRLALGAVLCWIIFL.

The protein belongs to the UppP family.

It is found in the cell inner membrane. The enzyme catalyses di-trans,octa-cis-undecaprenyl diphosphate + H2O = di-trans,octa-cis-undecaprenyl phosphate + phosphate + H(+). In terms of biological role, catalyzes the dephosphorylation of undecaprenyl diphosphate (UPP). Confers resistance to bacitracin. The chain is Undecaprenyl-diphosphatase from Shewanella pealeana (strain ATCC 700345 / ANG-SQ1).